A 522-amino-acid polypeptide reads, in one-letter code: Cytochrome P450 monooxygenase AKT7 (522 aa).

The chain crosses the membrane as a helical span at residues 10–30 (LYVTCTVLAALILGYIQAMII). Heme is bound at residue cysteine 452.

It belongs to the cytochrome P450 family. It depends on heme as a cofactor.

It is found in the membrane. The protein operates within mycotoxin biosynthesis. Its function is as follows. Cytochrome P450 monooxygenase; part of the gene clusters that mediate the biosynthesis of the host-selective toxins (HSTs) AK-toxins responsible for Japanese pear black spot disease by the Japanese pear pathotype. AK-toxins are esters of 9,10-epoxy 8-hydroxy 9-methyldecatrienoic acid (EDA). On cellular level, AK-toxins affect plasma membrane of susceptible cells and cause a sudden increase in loss of K(+) after a few minutes of toxin treatment. The acyl-CoA ligase AKT1, the hydrolase AKT2 and enoyl-CoA hydratase AKT3 are all involved in the biosynthesis of the AK-, AF- and ACT-toxin common 9,10-epoxy-8-hydroxy-9-methyl-decatrienoic acid (EDA) structural moiety. Part of the EDA biosynthesis occurs in the peroxisome since these 3 enzymes are localized in peroxisomes. The exact roles of the 3 enzymes, as well as of additional AK-toxin clusters enzymes, including AKT4, AKT6 and AKTS1, have still to be elucidated. The Cytochrome P450 monooxygenase AKT7 on the other side functions to limit production of EDA and AK-toxin, probably via the catalysis of a side reaction of EDA or its precursor. The chain is Cytochrome P450 monooxygenase AKT7 from Alternaria alternata (Alternaria rot fungus).